Reading from the N-terminus, the 393-residue chain is Formate-dependent phosphoribosylglycinamide formyltransferase (393 aa).

Residues Glu-22–Leu-23 and Glu-82 contribute to the N(1)-(5-phospho-beta-D-ribosyl)glycinamide site. ATP is bound by residues Arg-114, Lys-155, Ser-160–Gln-165, Glu-195–Ile-198, and Glu-203. An ATP-grasp domain is found at Arg-119 to Leu-308. Residues Glu-267 and Glu-279 each contribute to the Mg(2+) site. N(1)-(5-phospho-beta-D-ribosyl)glycinamide-binding positions include Asp-286, Lys-356, and Arg-363–Arg-364.

The protein belongs to the PurK/PurT family. Homodimer.

It catalyses the reaction N(1)-(5-phospho-beta-D-ribosyl)glycinamide + formate + ATP = N(2)-formyl-N(1)-(5-phospho-beta-D-ribosyl)glycinamide + ADP + phosphate + H(+). It functions in the pathway purine metabolism; IMP biosynthesis via de novo pathway; N(2)-formyl-N(1)-(5-phospho-D-ribosyl)glycinamide from N(1)-(5-phospho-D-ribosyl)glycinamide (formate route): step 1/1. Its function is as follows. Involved in the de novo purine biosynthesis. Catalyzes the transfer of formate to 5-phospho-ribosyl-glycinamide (GAR), producing 5-phospho-ribosyl-N-formylglycinamide (FGAR). Formate is provided by PurU via hydrolysis of 10-formyl-tetrahydrofolate. In Pseudomonas putida (strain W619), this protein is Formate-dependent phosphoribosylglycinamide formyltransferase.